A 431-amino-acid polypeptide reads, in one-letter code: MKRFFENLFSQTERSVLNTGKKVGAGIAAGEWKNTEWGYPIATQEVIFLAKVFQPQHVKRHPYHIVRGTIAPLAVTLPLAFFVLNYFGVISSKIGFVIALSSFIGGLTIWAISIVFDSLYDQQHTYEVKRGLVMGMMMFIISEIMFFFSFFWSYFYISLSPNIAIGCVWPPYGLTVYSYMGLPLLNTVLLLLSGAILTDGYTILTEQKAVHENNEKVIAVEEAFTNLMNLYTKKQSINTLTFVDERREKFFAKNDQNAEKKEIAISAGVKELRDLDWDLYFFENPQNMEPNYKAPTDLSVIEYALITIFLKKRNKVIKTRLYFTLVCAVVFLFCQGYEYYFAPFSMNDGIYGSLFFLLTGFHGFHVLVGSILIGIITIRFIVGNFDLLNVGTKFQIFKNKSTGFACTLFYWHFVDIVWIFLYIVIYWWGSR.

The next 7 helical transmembrane spans lie at 70-90, 96-116, 132-152, 176-196, 321-341, 356-376, and 408-428; these read IAPL…FGVI, FVIA…SIVF, LVMG…SFFW, VYSY…SGAI, LYFT…EYYF, FLLT…IGII, and LFYW…IYWW.

The protein belongs to the cytochrome c oxidase subunit 3 family. In terms of assembly, component of the cytochrome c oxidase (complex IV, CIV), a multisubunit enzyme composed of a catalytic core of 3 subunits and several supernumerary subunits. The complex exists as a monomer or a dimer and forms supercomplexes (SCs) in the inner mitochondrial membrane with ubiquinol-cytochrome c oxidoreductase (cytochrome b-c1 complex, complex III, CIII).

The protein resides in the mitochondrion inner membrane. The catalysed reaction is 4 Fe(II)-[cytochrome c] + O2 + 8 H(+)(in) = 4 Fe(III)-[cytochrome c] + 2 H2O + 4 H(+)(out). Component of the cytochrome c oxidase, the last enzyme in the mitochondrial electron transport chain which drives oxidative phosphorylation. The respiratory chain contains 3 multisubunit complexes succinate dehydrogenase (complex II, CII), ubiquinol-cytochrome c oxidoreductase (cytochrome b-c1 complex, complex III, CIII) and cytochrome c oxidase (complex IV, CIV), that cooperate to transfer electrons derived from NADH and succinate to molecular oxygen, creating an electrochemical gradient over the inner membrane that drives transmembrane transport and the ATP synthase. Cytochrome c oxidase is the component of the respiratory chain that catalyzes the reduction of oxygen to water. Electrons originating from reduced cytochrome c in the intermembrane space (IMS) are transferred via the dinuclear copper A center (CU(A)) of subunit 2 and heme A of subunit 1 to the active site in subunit 1, a binuclear center (BNC) formed by heme A3 and copper B (CU(B)). The BNC reduces molecular oxygen to 2 water molecules using 4 electrons from cytochrome c in the IMS and 4 protons from the mitochondrial matrix. In Dictyostelium citrinum (Slime mold), this protein is Cytochrome c oxidase subunit 3 (cox3).